The following is a 77-amino-acid chain: Small ribosomal subunit protein bS18 (77 aa).

This sequence belongs to the bacterial ribosomal protein bS18 family. Part of the 30S ribosomal subunit. Forms a tight heterodimer with protein bS6.

Its function is as follows. Binds as a heterodimer with protein bS6 to the central domain of the 16S rRNA, where it helps stabilize the platform of the 30S subunit. This Shouchella clausii (strain KSM-K16) (Alkalihalobacillus clausii) protein is Small ribosomal subunit protein bS18.